A 293-amino-acid chain; its full sequence is MSPPGLVVVDKPAGMTSHDVVGRCRRIFATRRVGHAGTLDPMATGVLVLGVERATKILGLLTAAAKSYSATIRLGQATSTDDAEGDVARSVDARHLTSQAIEAAVGGLRGDIHQVPSTVSAIKVAGKRAYKLVREGQAVELPARPVRIDRFEVRGLRAAGACVDVDVEVDCSSGTYVRALARDLGAALGVGGHLTALRRTRVGRFGLEQAYGLDELAECPRLSYSLDEACLLIFGRRDLSADEAEAAGNGRALAAAGIDGVYAACAPDGRVIALLRDEGARTKSVVVLRPATL.

Asp-40 acts as the Nucleophile in catalysis.

It belongs to the pseudouridine synthase TruB family. Type 1 subfamily.

The catalysed reaction is uridine(55) in tRNA = pseudouridine(55) in tRNA. Responsible for synthesis of pseudouridine from uracil-55 in the psi GC loop of transfer RNAs. In Mycolicibacterium paratuberculosis (strain ATCC BAA-968 / K-10) (Mycobacterium paratuberculosis), this protein is tRNA pseudouridine synthase B.